A 317-amino-acid chain; its full sequence is UV DNA damage endonuclease (317 aa).

This sequence belongs to the uve1/UvsE family.

Its function is as follows. Component in a DNA repair pathway. Removal of UV LIGHT damaged nucleotides. Recognizes pyrimidine dimers and cleave a phosphodiester bond immediately 5' to the lesion. The protein is UV DNA damage endonuclease of Bacillus thuringiensis subsp. konkukian (strain 97-27).